The sequence spans 77 residues: NAD(P)H-quinone oxidoreductase subunit L (77 aa).

Helical transmembrane passes span 10–30 (LLIA…LPAG) and 48–68 (LVMY…SPFL).

This sequence belongs to the complex I NdhL subunit family. NDH-1 can be composed of about 15 different subunits; different subcomplexes with different compositions have been identified which probably have different functions.

Its subcellular location is the cellular thylakoid membrane. The catalysed reaction is a plastoquinone + NADH + (n+1) H(+)(in) = a plastoquinol + NAD(+) + n H(+)(out). The enzyme catalyses a plastoquinone + NADPH + (n+1) H(+)(in) = a plastoquinol + NADP(+) + n H(+)(out). NDH-1 shuttles electrons from an unknown electron donor, via FMN and iron-sulfur (Fe-S) centers, to quinones in the respiratory and/or the photosynthetic chain. The immediate electron acceptor for the enzyme in this species is believed to be plastoquinone. Couples the redox reaction to proton translocation, and thus conserves the redox energy in a proton gradient. Cyanobacterial NDH-1 also plays a role in inorganic carbon-concentration. This chain is NAD(P)H-quinone oxidoreductase subunit L, found in Picosynechococcus sp. (strain ATCC 27264 / PCC 7002 / PR-6) (Agmenellum quadruplicatum).